Reading from the N-terminus, the 223-residue chain is Agamous-like MADS-box protein AGL11 (223 aa).

Positions 1–61 constitute an MADS-box domain; sequence MGRGKIEIKR…GRVYEYSNNN (61 aa). A K-box domain is found at 87–177; that stretch reads AQYYQQESAK…RTKIAEVERL (91 aa).

As to expression, expressed in flowers and seeds. Expressed in endotesta cell layer of developing seeds.

It is found in the nucleus. In terms of biological role, probable transcription factor involved in seed development. Plays a role in seed morphogenesis by promoting the correct development of endotesta cell layer, which directs the further development of the seed coat, the endosperm, and consequently the embryo. The protein is Agamous-like MADS-box protein AGL11 of Vitis vinifera (Grape).